Here is a 71-residue protein sequence, read N- to C-terminus: Pro-glucagon (71 aa).

The protein belongs to the glucagon family.

It is found in the secreted. Plays a key role in glucose metabolism and homeostasis. Regulates blood glucose by increasing gluconeogenesis and decreasing glycolysis. This is Pro-glucagon (gcg) from Ictalurus punctatus (Channel catfish).